The chain runs to 860 residues: Leucine--tRNA ligase (860 aa).

The short motif at 42–52 (PYPSGRLHMGH) is the 'HIGH' region element. Positions 619–623 (KMSKS) match the 'KMSKS' region motif. Lys-622 provides a ligand contact to ATP.

It belongs to the class-I aminoacyl-tRNA synthetase family.

It is found in the cytoplasm. It carries out the reaction tRNA(Leu) + L-leucine + ATP = L-leucyl-tRNA(Leu) + AMP + diphosphate. This is Leucine--tRNA ligase from Histophilus somni (strain 129Pt) (Haemophilus somnus).